We begin with the raw amino-acid sequence, 340 residues long: Ketol-acid reductoisomerase (NADP(+)) (340 aa).

Positions 3-182 (VQMEYEKDVK…GAARVGLLET (180 aa)) constitute a KARI N-terminal Rossmann domain. NADP(+) is bound by residues 26–29 (YGSQ), Arg-49, Ser-53, and 83–86 (DEIQ). The active site involves His-108. Residue Gly-134 participates in NADP(+) binding. Residues 183–328 (TYKEETEEDL…AELRKAMPFV (146 aa)) form the KARI C-terminal knotted domain. The Mg(2+) site is built by Asp-191, Glu-195, Glu-227, and Glu-231. Ser-252 is a substrate binding site.

It belongs to the ketol-acid reductoisomerase family. Mg(2+) is required as a cofactor.

The enzyme catalyses (2R)-2,3-dihydroxy-3-methylbutanoate + NADP(+) = (2S)-2-acetolactate + NADPH + H(+). It carries out the reaction (2R,3R)-2,3-dihydroxy-3-methylpentanoate + NADP(+) = (S)-2-ethyl-2-hydroxy-3-oxobutanoate + NADPH + H(+). It functions in the pathway amino-acid biosynthesis; L-isoleucine biosynthesis; L-isoleucine from 2-oxobutanoate: step 2/4. The protein operates within amino-acid biosynthesis; L-valine biosynthesis; L-valine from pyruvate: step 2/4. Functionally, involved in the biosynthesis of branched-chain amino acids (BCAA). Catalyzes an alkyl-migration followed by a ketol-acid reduction of (S)-2-acetolactate (S2AL) to yield (R)-2,3-dihydroxy-isovalerate. In the isomerase reaction, S2AL is rearranged via a Mg-dependent methyl migration to produce 3-hydroxy-3-methyl-2-ketobutyrate (HMKB). In the reductase reaction, this 2-ketoacid undergoes a metal-dependent reduction by NADPH to yield (R)-2,3-dihydroxy-isovalerate. The sequence is that of Ketol-acid reductoisomerase (NADP(+)) from Streptococcus gordonii (strain Challis / ATCC 35105 / BCRC 15272 / CH1 / DL1 / V288).